The primary structure comprises 1396 residues: MEDIFSLFERPKDPLSFNAIRLSLVSPEKIRERSFGEVKKPETINYRTFKPERDGLFCAKIFGPTKDYECNCGKYKRMKHRGIVCEKCGVEVIPSKVRRERLGHIDLACPVAHIWFLKSLPSRIATLLDMTLKEVERVLYFEAYLVLDAGDTPLFRGQLLTEDKYAETMEEYAGQFVATMGAEAIRDFLLSIDIEELSTVLRKEMSEAASEAKRKKVAKRLKVVEAFKFSGNRPEWLILETIPVLPPELRPLVPLDGGRFATSDLNDLYRRVINRNNRLKRLMELRAPEVIIRNEKRMLQEAVDALFDNGRRGRAITGPNKRPLKSLSDMLKGKGGRFRQNLLGKRVDYSGRSVIVVGPELKLHQCGLPKKMALELFKPFIYNKLEERGFCTTIKSAKKMVEKEKSEVWDVLEEVIKEHPVMLNRAPTLHRLGIQAFEPVLIEGKAIQLHPLVCTAFNADFDGDQMAVHLPLSIESQIETRVLMMSTNNILSPAHGKPIIVPSQDMILGLYYMTRERAFARGEGKILSSRDELRMAYDAGEIDLQAKIKVRMSPALGEPETLVETTTGRVLLRDVVPEVIPFDYINVVMAKKHVANLIDVCFRLAGNKETVLLADKLKDTGYRFSTMAGISICLDDMVIPESKDVLMKAAVEEVTEIQKQYTEGLITDGERYNKVIDIWAKCTEDIAQTMLDTLSKDEIVSPEGEAVKVPSFNSIHMMADSGARGSAQQIRQLAGMRGLMAKPSGEIIETPITANFREGLTVLQYFISTHGARKGLADTALKTANSGYLTRRLVDVAQDAIITEQDCDSLDGIVMTALTEGGEVIERLGDRILGRTALEDVLDPVTGEVLVEANQQIDETLVEKIENAGIEKVKIRSVLTCQSQRGICATCYGRDLARGHLVNLGEAVGVIAAQSIGEPGTQLTMRTFHIGGTASRRAEQTSLEARFDGFVKYLNLNSVLDAEGFHVVMNRNAEIAVVDETGRERERYGVVYGARLRINPDAPVQAGSLLAEWDPYTMPILTEIAGTVRFGDILEGVSMEEQVDEVTGLSRKVVIESKGADKRPRITLKDSEGKTAKLPNGAPARYMLPVGAIIVASEDETVSGGAILAKIPRETTKTKDITGGLPRVAELFEARKPKEYAIISEIDGVVSFGKDSKGKRKVHVTPEVGSPKEYLIPKGKHISVHEGDHIKAGEALMDGSSNPHDILRVLGEKELAKYLVDEVQEVYRLQGVKINDKHIEVIVRQMLRRVRIKEPGNTRFLADDQVERWEFECENRKVVGEGGAPAVGEPLMLGITKASLSTESFISAASFQETTKVLTQAAIEGKIDYLRGLKENVIMGRLIPAGTGISKYRSAHLLIEEPEEIEEPVPEDLEDETAGADSAQAASEESVAEGKD.

Residues Cys-70, Cys-72, Cys-85, and Cys-88 each coordinate Zn(2+). Residues Asp-460, Asp-462, and Asp-464 each contribute to the Mg(2+) site. Zn(2+) contacts are provided by Cys-807, Cys-881, Cys-888, and Cys-891. Over residues 1361-1378 the composition is skewed to acidic residues; that stretch reads EPEEIEEPVPEDLEDETA. Residues 1361 to 1396 are disordered; that stretch reads EPEEIEEPVPEDLEDETAGADSAQAASEESVAEGKD. Positions 1379 to 1389 are enriched in low complexity; that stretch reads GADSAQAASEE.

This sequence belongs to the RNA polymerase beta' chain family. As to quaternary structure, the RNAP catalytic core consists of 2 alpha, 1 beta, 1 beta' and 1 omega subunit. When a sigma factor is associated with the core the holoenzyme is formed, which can initiate transcription. It depends on Mg(2+) as a cofactor. Zn(2+) serves as cofactor.

The catalysed reaction is RNA(n) + a ribonucleoside 5'-triphosphate = RNA(n+1) + diphosphate. DNA-dependent RNA polymerase catalyzes the transcription of DNA into RNA using the four ribonucleoside triphosphates as substrates. The polypeptide is DNA-directed RNA polymerase subunit beta' (Syntrophotalea carbinolica (strain DSM 2380 / NBRC 103641 / GraBd1) (Pelobacter carbinolicus)).